We begin with the raw amino-acid sequence, 559 residues long: Glypican-1 (559 aa).

The signal sequence occupies residues 1–23 (MELRARGWWLLYAAAVLVACARG). 7 disulfide bridges follow: Cys-32-Cys-68, Cys-62-Cys-256, Cys-69-Cys-259, Cys-191-Cys-343, Cys-246-Cys-279, Cys-268-Cys-415, and Cys-272-Cys-401. N-linked (GlcNAc...) asparagine glycosylation is found at Asn-79 and Asn-116. The disordered stretch occupies residues 478–539 (FQDASDDGSG…SAAAPTPPQA (62 aa)). O-linked (Xyl...) (heparan sulfate) serine glycans are attached at residues Ser-486, Ser-488, and Ser-490. The GPI-anchor amidated serine moiety is linked to residue Ser-530. The propeptide at 531-559 (AAAPTPPQASPLLLLGLALALPAVAPRGR) is removed in mature form.

The protein belongs to the glypican family. S-nitrosylated in a Cu(2+)-dependent manner. Nitric acid (NO) is released from the nitrosylated cysteines by ascorbate or by some other reducing agent, in a Cu(2+) or Zn(2+) dependent manner. This free nitric oxide is then capable of cleaving the heparan sulfate side chains. Post-translationally, N- and O-glycosylated. N-glycosylation is mainly of the complex type containing sialic acid. O-glycosylated with heparan sulfate. The heparan sulfate chains can be cleaved either by the action of heparanase or, degraded by a deaminative process that uses nitric oxide (NO) released from the S-nitrosylated cysteines. This process is triggered by ascorbate, or by some other reducing agent, in a Cu(2+)- or Zn(2+) dependent manner. Cu(2+) ions are provided by ceruloproteins such as APP, PRNP or CP which associate with GCP1 in intracellular compartments or lipid rafts. In terms of processing, shed from the cell surface probably by further cleavage.

It localises to the cell membrane. Its subcellular location is the endosome. It is found in the secreted. The protein localises to the extracellular space. Cell surface proteoglycan that bears heparan sulfate. Binds, via the heparan sulfate side chains, alpha-4 (V) collagen and participates in Schwann cell myelination. May act as a catalyst in increasing the rate of conversion of prion protein PRPN (C) to PRNP (Sc) via associating (via the heparan sulfate side chains) with both forms of PRPN, targeting them to lipid rafts and facilitating their interaction. Required for proper skeletal muscle differentiation by sequestering FGF2 in lipid rafts preventing its binding to receptors (FGFRs) and inhibiting the FGF-mediated signaling. The sequence is that of Glypican-1 (GPC1) from Bos taurus (Bovine).